Consider the following 242-residue polypeptide: Glucosamine-6-phosphate deaminase (242 aa).

The active-site Proton acceptor; for enolization step is Asp67. The For ring-opening step role is filled by Asn136. Residue His138 is the Proton acceptor; for ring-opening step of the active site. The active-site For ring-opening step is Glu143.

It belongs to the glucosamine/galactosamine-6-phosphate isomerase family. NagB subfamily.

It carries out the reaction alpha-D-glucosamine 6-phosphate + H2O = beta-D-fructose 6-phosphate + NH4(+). It participates in amino-sugar metabolism; N-acetylneuraminate degradation; D-fructose 6-phosphate from N-acetylneuraminate: step 5/5. Its function is as follows. Catalyzes the reversible isomerization-deamination of glucosamine 6-phosphate (GlcN6P) to form fructose 6-phosphate (Fru6P) and ammonium ion. In Clostridium beijerinckii (strain ATCC 51743 / NCIMB 8052) (Clostridium acetobutylicum), this protein is Glucosamine-6-phosphate deaminase.